Consider the following 696-residue polypeptide: Glycine--tRNA ligase beta subunit (696 aa).

Belongs to the class-II aminoacyl-tRNA synthetase family. Tetramer of two alpha and two beta subunits.

It is found in the cytoplasm. It carries out the reaction tRNA(Gly) + glycine + ATP = glycyl-tRNA(Gly) + AMP + diphosphate. This is Glycine--tRNA ligase beta subunit from Aromatoleum aromaticum (strain DSM 19018 / LMG 30748 / EbN1) (Azoarcus sp. (strain EbN1)).